A 42-amino-acid polypeptide reads, in one-letter code: Photosystem I reaction center subunit IX (42 aa).

The chain crosses the membrane as a helical span at residues 7 to 27 (YLSTAPVLAAVWFTVLAGILI).

Belongs to the PsaJ family.

It localises to the plastid. It is found in the chloroplast thylakoid membrane. In terms of biological role, may help in the organization of the PsaE and PsaF subunits. The polypeptide is Photosystem I reaction center subunit IX (Ostreococcus tauri).